A 100-amino-acid chain; its full sequence is MLSSVALRYLLVLSLAFLAVVTSSRTQSRFASYELMGTEGTECVTTKTISQICYQCATRHEDSFVQVYQECCKKEMGLREYCEEIYTELPIRSGLWQPNK.

Positions 1–23 (MLSSVALRYLLVLSLAFLAVVTS) are cleaved as a signal peptide.

In terms of processing, three disulfide bonds are present. In terms of tissue distribution, expressed by the yellow cells, peptidergic (neuroendocrine) neurons of the central nervous system.

In terms of biological role, stimulates integumental Na(+) uptake. Controls the activity of sodium pumps in the integument, pericardium, ureter and nephridial gland. In Lymnaea stagnalis (Great pond snail), this protein is Sodium-influx-stimulating peptide (SIS).